The chain runs to 3916 residues: Fusarin C synthetase (3916 aa).

Residues 9 to 440 enclose the Ketosynthase family 3 (KS3) domain; the sequence is KEPIAIIGTS…GTNVHAIIEQ (432 aa). Catalysis depends on for beta-ketoacyl synthase activity residues cysteine 182, histidine 319, and histidine 360. Residues 548–869 form a malonyl-CoA:ACP transacylase (MAT) domain region; it reads VFTGQGAQWP…VTRNIHDVEA (322 aa). Positions 935-1068 are N-terminal hotdog fold; it reads HPLLGARSVE…GQLRVEFSSL (134 aa). The tract at residues 935–1228 is dehydratase (DH) domain; sequence HPLLGARSVE…GLTCTSLLRP (294 aa). In terms of domain architecture, PKS/mFAS DH spans 935 to 1231; sequence HPLLGARSVE…CTSLLRPGPS (297 aa). Histidine 967 functions as the Proton acceptor; for dehydratase activity in the catalytic mechanism. The C-terminal hotdog fold stretch occupies residues 1084-1231; it reads LTSVDMERFY…CTSLLRPGPS (148 aa). Aspartate 1141 serves as the catalytic Proton donor; for dehydratase activity. Residues 1350-1584 are C-methyltransferase (CMeT) domain; it reads VGENLPAVVR…YMTSVMLSQA (235 aa). The interval 2092 to 2266 is ketoreductase (KR) domain 1; it reads TYLLIGFTGG…AASVMHIGMV (175 aa). Residues 2372 to 2449 enclose the Carrier 1 domain; that stretch reads EILAVVEEEF…ELCSTVVSHL (78 aa). Serine 2409 carries the post-translational modification O-(pantetheine 4'-phosphoryl)serine. Residues 2482–2511 form a disordered region; sequence ASPTENEPFTIRNSPNSTQVTSESGVDEET. Over residues 2486–2505 the composition is skewed to polar residues; sequence ENEPFTIRNSPNSTQVTSES. The segment at 2522–2806 is condensation; it reads PLSFAQERLW…VNLLPLRLKL (285 aa). An adenylation region spans residues 2973-3385; it reads FEKCVVNQPD…RIAGDSQIKL (413 aa). The 78-residue stretch at 3493–3570 folds into the Carrier 2 domain; that stretch reads KPLTETQERL…EMAAKIDGFT (78 aa). Position 3530 is an O-(pantetheine 4'-phosphoryl)serine (serine 3530). Residues 3612-3833 are thiolester reductase (R) domain; sequence LTGATGFLGV…DFVPVDVVAA (222 aa).

It in the C-terminal section; belongs to the NRP synthetase family.

It participates in mycotoxin biosynthesis. Functionally, fusarin C synthetase; part of the gene cluster that mediates the biosynthesis of the mycotoxin fusarin C. Within the cluster, FUS1, FUS2, FUS8 and FUS9 are sufficient for fusarin production. The roles of the other FUS members are yet undetermined. The fusarin C synthetase FUS1 is responsible for the condensation of one acetyl-coenzyme A (CoA) unit with six malonyl-CoA units and the amide linkage of the arising heptaketide and homoserine, subsequently releasing the first intermediate, prefusarin, as an alcohol with an open ring structure. The cytochrome P450 monooxygenase FUS8 participates in multiple oxidation processes at carbon C-20 and is able to use the FUS1 product as substrate, resulting in formation of 20-hydroxy-prefusarin. This reaction seems to be essential before the 2-pyrrolidone ring closure can be catalyzed by FUS2, generating 20-hydroxy-fusarin. FUS8 is able to further oxidizes carbon C-20 after ring closure, resulting in the formation of carboxy-fusarin C. As the last step, FUS9 methylates the hydroxyl group at C-21 to generate fusarin C. Fusarin C can then rearrange to epi-fusarin C, the (z)-isomers, and fusarin A and fusarin D. In Gibberella moniliformis (strain M3125 / FGSC 7600) (Maize ear and stalk rot fungus), this protein is Fusarin C synthetase.